The chain runs to 463 residues: uncharacterized protein (463 aa).

The next 12 membrane-spanning stretches (helical) occupy residues 17–37 (ISLM…SASA), 40–60 (LAGP…FFIM), 97–117 (WFLW…YMGF), 122–142 (VPNW…NFLA), 153–173 (FALI…LMII), 201–221 (GVLL…MIGV), 244–264 (ILIF…WQEI), 278–298 (VGIP…ALSS), 335–355 (AVLA…VVPA), 357–377 (VFTW…AIIL), 401–421 (LFPF…ILMA), and 429–449 (AVII…GKGF).

The protein belongs to the amino acid-polyamine-organocation (APC) superfamily.

The protein resides in the cell membrane. This is an uncharacterized protein from Bacillus subtilis (strain 168).